The primary structure comprises 288 residues: Fibroblast growth factor 2 (288 aa).

Residues 1 to 133 are disordered; that stretch reads MVGVGGGDVE…RGSRPGPAGT (133 aa). A propeptide spans 1–142 (or 93, or 124, or 125, or 131, or 161); the sequence is MVGVGGGDVE…TMAAGSITTL (142 aa). Residues 52 to 64 show a composition bias toward low complexity; that stretch reads SVNPRSRAAGSPR. Residues 68–84 show a composition bias toward basic and acidic residues; the sequence is RRTEERPSGSRLGDRGR. Omega-N-methylarginine; alternate occurs at positions 108, 110, and 112. Residues R108, R110, and R112 each carry the symmetric dimethylarginine; alternate modification. A compositionally biased stretch (low complexity) spans 113–132; sequence GTAAPRAAPAARGSRPGPAG. N169 lines the heparin pocket. Residues 179–181 carry the Cell attachment site; atypical motif; it reads DGR. At Y215 the chain carries Phosphotyrosine; by TEC. The Cell attachment site; atypical motif lies at 221 to 223; it reads DGR. K228 is covalently cross-linked (Glycyl lysine isopeptide (Lys-Gly) (interchain with G-Cter in SUMO1)). The interval 261–277 is heparin-binding; that stretch reads KRTGQYKLGSKTGPGQK.

The protein belongs to the heparin-binding growth factors family. As to quaternary structure, monomer. Homodimer. Interacts with FGFR1, FGFR2, FGFR3 and FGFR4. Affinity between fibroblast growth factors (FGFs) and their receptors is increased by heparan sulfate glycosaminoglycans that function as coreceptors. Interacts with CSPG4, FGFBP1 and TEC. Found in a complex with FGFBP1, FGF1 and FGF2. Interacts with FGFBP3. Interacts with integrin ITGAV:ITGB3; the interaction is required for FGF2 signaling. Interacts with SNORC (via the extracellular domain). Interacts with glypican GPC3. Phosphorylation at Tyr-215 regulates FGF2 unconventional secretion. In terms of processing, several N-termini starting at positions 94, 125, 126, 132, 143 and 162 have been identified by direct sequencing. In terms of tissue distribution, expressed in granulosa and cumulus cells. Expressed in hepatocellular carcinoma cells, but not in non-cancerous liver tissue.

Its subcellular location is the secreted. It is found in the nucleus. Functionally, acts as a ligand for FGFR1, FGFR2, FGFR3 and FGFR4. Also acts as an integrin ligand which is required for FGF2 signaling. Binds to integrin ITGAV:ITGB3. Plays an important role in the regulation of cell survival, cell division, cell differentiation and cell migration. Functions as a potent mitogen in vitro. Can induce angiogenesis. Mediates phosphorylation of ERK1/2 and thereby promotes retinal lens fiber differentiation. The protein is Fibroblast growth factor 2 (FGF2) of Homo sapiens (Human).